Here is a 432-residue protein sequence, read N- to C-terminus: MAEGGQAQQQPPQLGPGAAARGMKRESEVELPVPGAGADGPEPGLSKRPRTEEAADEGMQGNQEPTTTPDAMVQPFTTIPFPPPPQNGIPTEYGVPHTQDYAGQTSEHNLTLYGSSQPHGEQSSNSPSNQNGSLTQTEGGAQTDGQQSQTQSSENSESKSTPKRLHVSNIPFRFRDPDLRQMFGQFGKILDVEIIFNERGSKGFGFVTFENSADADRAREKLHGTVVEGRKIEVNNATARVMTNKKMVTPYANGWKLSPVVGAVYGPELYAASSFQADVSLGNEAAVPLSGRGGINTYIPLISLPLVPGFPYPTAATTAAAFRGAHLRGRGRTVYGAVRAVPPTAIPAYPGVVYQDGFYGADLYGGYAAYRYAQPATATAATAAAAAAAAYSDGYGRVYTADPYHALAPAASYGVGAVASLYRGGYSRFAPY.

A compositionally biased stretch (low complexity) spans 1-21 (MAEGGQAQQQPPQLGPGAAAR). The tract at residues 1–169 (MAEGGQAQQQ…STPKRLHVSN (169 aa)) is disordered. 2 stretches are compositionally biased toward polar residues: residues 60 to 69 (QGNQEPTTTP) and 101 to 121 (YAGQ…PHGE). Over residues 122–159 (QSSNSPSNQNGSLTQTEGGAQTDGQQSQTQSSENSESK) the composition is skewed to low complexity. The 77-residue stretch at 163 to 239 (KRLHVSNIPF…RKIEVNNATA (77 aa)) folds into the RRM domain. At Arg323 the chain carries Omega-N-methylarginine. Residues Arg339 and Arg371 each carry the asymmetric dimethylarginine modification. Residues Arg423 and Arg428 each carry the asymmetric dimethylarginine; alternate modification. Arg423 and Arg428 each carry omega-N-methylarginine; alternate.

In terms of assembly, interacts with ER-alpha N-terminal activation domain. Interacts with RBPMS; the interaction allows cooperative assembly of stable cell-specific alternative splicing regulatory complexes.

Its subcellular location is the nucleus. The protein resides in the cytoplasm. RNA-binding protein that regulates alternative splicing events by binding to 5'-UGCAUGU-3' elements. Prevents binding of U2AF2 to the 3'-splice site. Regulates alternative splicing of tissue-specific exons and of differentially spliced exons during erythropoiesis. Seems to act as a coregulatory factor of ER-alpha. Together with RNA binding proteins RBPMS and MBNL1/2, activates vascular smooth muscle cells alternative splicing events. This is RNA binding protein fox-1 homolog 2 (Rbfox2) from Rattus norvegicus (Rat).